The following is a 471-amino-acid chain: Tyrosine--tRNA ligase, mitochondrial (471 aa).

Y71 is an L-tyrosine binding site. Position 75 (D75) interacts with ATP. Positions 76 to 85 match the 'HIGH' region motif; sequence PTGDSLHVGH. L-tyrosine-binding residues include D115, Y215, Q219, D222, and Q241. ATP contacts are provided by I268 and K278. The 'KMSKS' region signature appears at 275 to 279; that stretch reads KLGKS. Residues K349 and K361 each carry the N6-acetyllysine modification.

This sequence belongs to the class-I aminoacyl-tRNA synthetase family. As to quaternary structure, homodimer.

The protein localises to the mitochondrion matrix. The catalysed reaction is tRNA(Tyr) + L-tyrosine + ATP = L-tyrosyl-tRNA(Tyr) + AMP + diphosphate + H(+). Catalyzes the attachment of tyrosine to tRNA(Tyr) in a two-step reaction: tyrosine is first activated by ATP to form Tyr-AMP and then transferred to the acceptor end of tRNA(Tyr). This chain is Tyrosine--tRNA ligase, mitochondrial (Yars2), found in Rattus norvegicus (Rat).